The sequence spans 326 residues: Deoxyuridine 5'-triphosphate nucleotidohydrolase (326 aa).

Residues 218–220 and 321–322 each bind substrate; these read RSS and FG.

It belongs to the dUTPase family. The cofactor is Mg(2+).

It catalyses the reaction dUTP + H2O = dUMP + diphosphate + H(+). Functionally, involved in nucleotide metabolism: produces dUMP, the immediate precursor of thymidine nucleotides and decreases the intracellular concentration of dUTP to avoid uracil incorporation into viral DNA. The chain is Deoxyuridine 5'-triphosphate nucleotidohydrolase from Equus caballus (Horse).